We begin with the raw amino-acid sequence, 558 residues long: Pentatricopeptide repeat-containing protein At1g06140, mitochondrial (558 aa).

A mitochondrion-targeting transit peptide spans 1-79; sequence MLPVNRARAL…RNRHSWNTIL (79 aa). 13 PPR repeats span residues 38 to 68, 71 to 103, 108 to 142, 143 to 173, 174 to 208, 209 to 243, 245 to 275, 276 to 310, 311 to 345, 346 to 376, 377 to 411, 412 to 447, and 448 to 482; these read EVVL…IPCW, NRHS…MRRH, DSFN…GLDK, DDYV…IPVR, NSVL…GLAL, DALT…SFID, SDYL…SVDR, NVVM…SILP, NQCT…GIEM, DAVN…MPER, NVIS…NVVP, NSVT…GVVP, and EEEH…PMAS. The segment at 483–558 is type E motif; that stretch reads AWGALLSACR…HVGQSATEVG (76 aa).

This sequence belongs to the PPR family. PCMP-E subfamily.

It localises to the mitochondrion. The chain is Pentatricopeptide repeat-containing protein At1g06140, mitochondrial (PCMP-E61) from Arabidopsis thaliana (Mouse-ear cress).